The chain runs to 311 residues: MTSYAITAVASSKVNLHLGVGNARDDGYHELVTVFQSLSLHDTITVTPAADDMHDAEDQGIVATLSVSGDSAQAVPTDATNLAWQAAEKMYQAHRRNGGAPAKRVHIAIDKGIPVAGGMAGGSADAAATLAAMAQYLGNTNTEQEILSIAAELGSDVPFTYLGDTRLGTGRGEQLVPVLSRGTYHWALAFSAQGLSTPEVFRKIDQMDRQPHLDVTALNAALITGDPHKVAAHLHNDLQAAALSLRPELRTILEQGRAAGALAGIVSGSGPTCAFLCEDAETAQAVAAELSVHYRTAVATGPVRGAHVKGH.

Lys13 is an active-site residue. 114–124 (PVAGGMAGGSA) contributes to the ATP binding site. The active site involves Asp156.

It belongs to the GHMP kinase family. IspE subfamily.

The enzyme catalyses 4-CDP-2-C-methyl-D-erythritol + ATP = 4-CDP-2-C-methyl-D-erythritol 2-phosphate + ADP + H(+). The protein operates within isoprenoid biosynthesis; isopentenyl diphosphate biosynthesis via DXP pathway; isopentenyl diphosphate from 1-deoxy-D-xylulose 5-phosphate: step 3/6. Its function is as follows. Catalyzes the phosphorylation of the position 2 hydroxy group of 4-diphosphocytidyl-2C-methyl-D-erythritol. This chain is 4-diphosphocytidyl-2-C-methyl-D-erythritol kinase, found in Corynebacterium diphtheriae (strain ATCC 700971 / NCTC 13129 / Biotype gravis).